The primary structure comprises 524 residues: G1/S-specific cyclin-E (524 aa).

A disordered region spans residues 1-155; it reads MAGRKSSRTA…EESHEMVRLE (155 aa). Positions 18–47 are enriched in basic and acidic residues; it reads KPERKSAILSPHDELRERLLETAIDMKENI. Residues 48–62 show a composition bias toward polar residues; sequence PQRNTRNSSVGSQKS. Composition is skewed to basic and acidic residues over residues 63–78, 86–95, and 146–155; these read DCSE…EGPA, KHRNGSREDS, and EESHEMVRLE.

The protein belongs to the cyclin family. Cyclin E subfamily. As to quaternary structure, interacts with a member of the CDK2/CDK protein kinases to form a serine/threonine kinase holoenzyme complex. The cyclin subunit imparts substrate specificity to the complex. Expressed dynamically in proliferating cells throughout development. Detectable in larval blast cells undergoing active proliferation that give rise to all tissue types, including germline, intestine, hypodermis, neurons, and muscle.

It localises to the nucleus. Its subcellular location is the cytoplasm. The protein resides in the cytoskeleton. It is found in the microtubule organizing center. The protein localises to the centrosome. It localises to the centriole. In terms of biological role, essential for the control of the cell cycle at the G1/S (start) transition. In association with cdk-2, regulates proliferation, quiescent state and cell fate during the development of several cell lineages. In the embryo, initiates the establishment of cell polarity through the recruitment of the centrosomal proteins spd-2 and spd-5 during prophase. During the development of the vulva, controls the onset of vulval cell terminal differentiation by controlling the duration of G1 phase. During hypoderm development at early larval stages, controls syncytial fate of seam cell daughter cells. Involved in the progression of cell division in the intestinal lineage in larvae, and in particular in endoreplication, a specific growth pathway in the intestinal epithelium, required for feeding and gut development in growing larvae. By controlling the activity of translational repressor gld-1, regulates the pool of germline stem cells and the size of the mitotic zone by preventing entry into meiosis. In addition, repression of expression by gld-1 prevents mitosis re-entry in meiotic germline cells. This Caenorhabditis elegans protein is G1/S-specific cyclin-E.